The primary structure comprises 382 residues: UDP-4-amino-4-deoxy-L-arabinose--oxoglutarate aminotransferase (382 aa).

At Lys182 the chain carries N6-(pyridoxal phosphate)lysine.

This sequence belongs to the DegT/DnrJ/EryC1 family. ArnB subfamily. Homodimer. Pyridoxal 5'-phosphate is required as a cofactor.

It catalyses the reaction UDP-4-amino-4-deoxy-beta-L-arabinose + 2-oxoglutarate = UDP-beta-L-threo-pentopyranos-4-ulose + L-glutamate. Its pathway is nucleotide-sugar biosynthesis; UDP-4-deoxy-4-formamido-beta-L-arabinose biosynthesis; UDP-4-deoxy-4-formamido-beta-L-arabinose from UDP-alpha-D-glucuronate: step 2/3. It participates in bacterial outer membrane biogenesis; lipopolysaccharide biosynthesis. In terms of biological role, catalyzes the conversion of UDP-4-keto-arabinose (UDP-Ara4O) to UDP-4-amino-4-deoxy-L-arabinose (UDP-L-Ara4N). The modified arabinose is attached to lipid A and is required for resistance to polymyxin and cationic antimicrobial peptides. This is UDP-4-amino-4-deoxy-L-arabinose--oxoglutarate aminotransferase from Yersinia enterocolitica serotype O:8 / biotype 1B (strain NCTC 13174 / 8081).